The chain runs to 399 residues: Stearoyl-[acyl-carrier-protein] 9-desaturase, seed specific, chloroplastic (399 aa).

The N-terminal 34 residues, 1 to 34, are a transit peptide targeting the chloroplast; the sequence is MALKFNPLVSQPYKLASSARPPVSTFRSPKFLCL. The Fe cation site is built by glutamate 141, glutamate 179, histidine 182, glutamate 232, glutamate 265, and histidine 268.

Belongs to the fatty acid desaturase type 2 family. In terms of assembly, homodimer. The cofactor is Fe(2+). Developing seeds.

The protein localises to the plastid. It localises to the chloroplast. It catalyses the reaction octadecanoyl-[ACP] + 2 reduced [2Fe-2S]-[ferredoxin] + O2 + 2 H(+) = (9Z)-octadecenoyl-[ACP] + 2 oxidized [2Fe-2S]-[ferredoxin] + 2 H2O. It participates in lipid metabolism; fatty acid metabolism. Converts stearoyl-ACP to oleoyl-ACP by introduction of a cis double bond between carbons Delta(9) and Delta(10) of the acyl chain. This chain is Stearoyl-[acyl-carrier-protein] 9-desaturase, seed specific, chloroplastic, found in Brassica napus (Rape).